The sequence spans 283 residues: Elongation factor Ts (283 aa).

The interval 79 to 82 (TDFV) is involved in Mg(2+) ion dislocation from EF-Tu.

It belongs to the EF-Ts family.

The protein resides in the cytoplasm. In terms of biological role, associates with the EF-Tu.GDP complex and induces the exchange of GDP to GTP. It remains bound to the aminoacyl-tRNA.EF-Tu.GTP complex up to the GTP hydrolysis stage on the ribosome. This chain is Elongation factor Ts, found in Shewanella amazonensis (strain ATCC BAA-1098 / SB2B).